The chain runs to 393 residues: NAD(P)H-quinone oxidoreductase subunit H, chloroplastic (393 aa).

Belongs to the complex I 49 kDa subunit family. NDH is composed of at least 16 different subunits, 5 of which are encoded in the nucleus.

The protein localises to the plastid. It localises to the chloroplast thylakoid membrane. The enzyme catalyses a plastoquinone + NADH + (n+1) H(+)(in) = a plastoquinol + NAD(+) + n H(+)(out). It carries out the reaction a plastoquinone + NADPH + (n+1) H(+)(in) = a plastoquinol + NADP(+) + n H(+)(out). Functionally, NDH shuttles electrons from NAD(P)H:plastoquinone, via FMN and iron-sulfur (Fe-S) centers, to quinones in the photosynthetic chain and possibly in a chloroplast respiratory chain. The immediate electron acceptor for the enzyme in this species is believed to be plastoquinone. Couples the redox reaction to proton translocation, and thus conserves the redox energy in a proton gradient. In Ceratophyllum demersum (Rigid hornwort), this protein is NAD(P)H-quinone oxidoreductase subunit H, chloroplastic.